The chain runs to 189 residues: Ornithine decarboxylase antizyme 2 (189 aa).

Serine 186 bears the Phosphoserine mark.

This sequence belongs to the ODC antizyme family. In terms of assembly, interacts with ODC1 and thereby sterically blocks ODC homodimerization. Interacts with AZIN2; this interaction disrupts the interaction between the antizyme and ODC1.

Its subcellular location is the nucleus. Ornithine decarboxylase (ODC) antizyme protein that negatively regulates ODC activity and intracellular polyamine biosynthesis and uptake in response to increased intracellular polyamine levels. Binds to ODC monomers, inhibiting the assembly of the functional ODC homodimers. Does not target the ODC monomers for degradation, which allows a protein synthesis-independent restoration of ODC activity. Involved in the translocation of AZIN2 from ER-Golgi intermediate compartment (ERGIC) to the cytosol. This chain is Ornithine decarboxylase antizyme 2 (Oaz2), found in Mus musculus (Mouse).